Here is a 349-residue protein sequence, read N- to C-terminus: tRNA pseudouridine synthase D (349 aa).

Phenylalanine 27 serves as a coordination point for substrate. Catalysis depends on aspartate 80, which acts as the Nucleophile. Asparagine 129 provides a ligand contact to substrate. A TRUD domain is found at 155–303 (GVPNYFGAQR…VEAARRAMLL (149 aa)). Position 329 (phenylalanine 329) interacts with substrate.

Belongs to the pseudouridine synthase TruD family.

It carries out the reaction uridine(13) in tRNA = pseudouridine(13) in tRNA. In terms of biological role, responsible for synthesis of pseudouridine from uracil-13 in transfer RNAs. The polypeptide is tRNA pseudouridine synthase D (Escherichia coli (strain SE11)).